Consider the following 532-residue polypeptide: 56 kDa type-specific antigen (532 aa).

An N-terminal signal peptide occupies residues 1 to 22; that stretch reads MKKIMLIASAMSALSLPFSASA. A helical transmembrane segment spans residues 67–87; that stretch reads LTTGLPFGGTLAAGMTIAPGF. 2 disordered regions span residues 113–140 and 400–426; these read KGEI…PQPT and QQEE…SKEG. Over residues 403–413 the composition is skewed to basic and acidic residues; it reads EDAKNQGKGDC. A helical transmembrane segment spans residues 480-500; it reads TGMVASGALGVAINAAEGVCV.

It is found in the cell membrane. May be an adherent factor for rickettsial adsorption to the host-cell surface and a determinant of virulence of individual rickettsial strain. It is the major outer membrane protein. In Orientia tsutsugamushi (Rickettsia tsutsugamushi), this protein is 56 kDa type-specific antigen.